The following is a 233-amino-acid chain: UPF0173 metal-dependent hydrolase Acid345_3437 (233 aa).

Belongs to the UPF0173 family.

The protein is UPF0173 metal-dependent hydrolase Acid345_3437 of Koribacter versatilis (strain Ellin345).